Consider the following 86-residue polypeptide: Anti-adapter protein IraP (86 aa).

The stretch at 1 to 38 (MKNLIAELLVKLAQKEEEAKELTVQVEALEIVVTALLR) forms a coiled coil.

The protein belongs to the IraP family. As to quaternary structure, interacts with RssB.

The protein localises to the cytoplasm. Inhibits RpoS proteolysis by regulating RssB activity, thereby increasing the stability of the sigma stress factor RpoS especially during phosphate starvation, but also in stationary phase and during nitrogen starvation. Its effect on RpoS stability is due to its interaction with RssB, which probably blocks the interaction of RssB with RpoS, and the consequent delivery of the RssB-RpoS complex to the ClpXP protein degradation pathway. The sequence is that of Anti-adapter protein IraP from Klebsiella pneumoniae subsp. pneumoniae (strain ATCC 700721 / MGH 78578).